A 316-amino-acid polypeptide reads, in one-letter code: Protoheme IX farnesyltransferase (316 aa).

The segment at 1–21 (MAKSQALGNAPLTSTVAENAT) is disordered. A compositionally biased stretch (polar residues) spans 11-21 (PLTSTVAENAT). Helical transmembrane passes span 42–62 (VVAM…PGIP), 67–87 (VILG…FNHV), 115–135 (VVFA…LNAL), 136–156 (TAWL…VWLK), 163–183 (IVIG…AVTG), 189–209 (ALLL…ALAI), 235–255 (MVLL…LTGM), 256–276 (SGGV…GYAL), and 295–315 (IWHL…TSLM).

It belongs to the UbiA prenyltransferase family. Protoheme IX farnesyltransferase subfamily.

It localises to the cell inner membrane. The catalysed reaction is heme b + (2E,6E)-farnesyl diphosphate + H2O = Fe(II)-heme o + diphosphate. It participates in porphyrin-containing compound metabolism; heme O biosynthesis; heme O from protoheme: step 1/1. Its function is as follows. Converts heme B (protoheme IX) to heme O by substitution of the vinyl group on carbon 2 of heme B porphyrin ring with a hydroxyethyl farnesyl side group. The sequence is that of Protoheme IX farnesyltransferase from Photobacterium profundum (strain SS9).